We begin with the raw amino-acid sequence, 1198 residues long: Rac guanine nucleotide exchange factor B (1198 aa).

The interval 1–104 (MFSNFFGSSK…QHQGVITSLQ (104 aa)) is disordered. Over residues 8-20 (SSKRNTIASSSSS) the composition is skewed to low complexity. Residues 21–34 (SKKDKDNGKDESSK) are compositionally biased toward basic and acidic residues. Over residues 35-58 (LKNSGSSTLPKPITNNESGNNFIT) the composition is skewed to polar residues. Low complexity predominate over residues 59-97 (SPSVSSPLISPLSSSPSPLLSSSSNSIQSTSHQQQQQHQ). A Calponin-homology (CH) 1 domain is found at 126-232 (SSLEQTARKW…NIVVLGKHAS (107 aa)). Positions 260–284 (FGGNHNNNNNNNNNNNTSNGDLSPV) are disordered. The span at 263-275 (NHNNNNNNNNNNN) shows a compositional bias: low complexity. 2 Calponin-homology (CH) domains span residues 341-449 (PELQ…NKMY) and 511-619 (PEDM…ENFD). The 215-residue stretch at 632 to 846 (RRQKVIEEII…KRVADHVNES (215 aa)) folds into the DH domain. In terms of domain architecture, PH spans 876 to 1026 (TYIREGFLEI…WMEDLRSCLQ (151 aa)). Residues 940–952 (GEACVDGDDDGGE) are compositionally biased toward acidic residues. Disordered stretches follow at residues 940 to 989 (GEAC…SNKS) and 1076 to 1198 (NNNN…IDNQ). Low complexity-rich tracts occupy residues 977–989 (NSNNNNNSNSNKS) and 1076–1118 (NNNN…NNND). Acidic residues predominate over residues 1155 to 1167 (DETISDTESDDYE). Over residues 1188–1198 (FSDTIKNIDNQ) the composition is skewed to polar residues.

In terms of assembly, binds to F-actin.

The protein localises to the late endosome. Its function is as follows. Involved in the regulation of the late steps of the endocytic pathway. This chain is Rac guanine nucleotide exchange factor B (gxcB), found in Dictyostelium discoideum (Social amoeba).